Consider the following 174-residue polypeptide: NADH-quinone oxidoreductase subunit B 2 (174 aa).

Positions 51, 52, 116, and 145 each coordinate [4Fe-4S] cluster.

This sequence belongs to the complex I 20 kDa subunit family. As to quaternary structure, NDH-1 is composed of 14 different subunits. Subunits NuoB, C, D, E, F, and G constitute the peripheral sector of the complex. [4Fe-4S] cluster is required as a cofactor.

Its subcellular location is the cell inner membrane. The catalysed reaction is a quinone + NADH + 5 H(+)(in) = a quinol + NAD(+) + 4 H(+)(out). Functionally, NDH-1 shuttles electrons from NADH, via FMN and iron-sulfur (Fe-S) centers, to quinones in the respiratory chain. The immediate electron acceptor for the enzyme in this species is believed to be ubiquinone. Couples the redox reaction to proton translocation (for every two electrons transferred, four hydrogen ions are translocated across the cytoplasmic membrane), and thus conserves the redox energy in a proton gradient. The sequence is that of NADH-quinone oxidoreductase subunit B 2 from Thermodesulfovibrio yellowstonii (strain ATCC 51303 / DSM 11347 / YP87).